Here is a 403-residue protein sequence, read N- to C-terminus: Na(+)-translocating NADH-quinone reductase subunit B (403 aa).

4 helical membrane-spanning segments follow: residues 56 to 76, 121 to 141, 164 to 184, and 195 to 212; these read MMIL…WNTG, AYFL…EVLF, LPPS…VVIG, and FLNP…AYPA. Thr-230 is subject to FMN phosphoryl threonine. 6 helical membrane-spanning segments follow: residues 237–257, 265–285, 287–307, 312–332, 348–368, and 371–391; these read AGGV…FLGI, TSTL…IAAW, IVAG…LIGS, MFAM…GTLF, WAFG…NPAF, and GMML…HFVV.

The protein belongs to the NqrB/RnfD family. In terms of assembly, composed of six subunits; NqrA, NqrB, NqrC, NqrD, NqrE and NqrF. FMN serves as cofactor.

The protein resides in the cell inner membrane. The catalysed reaction is a ubiquinone + n Na(+)(in) + NADH + H(+) = a ubiquinol + n Na(+)(out) + NAD(+). NQR complex catalyzes the reduction of ubiquinone-1 to ubiquinol by two successive reactions, coupled with the transport of Na(+) ions from the cytoplasm to the periplasm. NqrA to NqrE are probably involved in the second step, the conversion of ubisemiquinone to ubiquinol. This Azotobacter vinelandii (strain DJ / ATCC BAA-1303) protein is Na(+)-translocating NADH-quinone reductase subunit B.